The chain runs to 455 residues: Neuronal acetylcholine receptor subunit beta-3 (455 aa).

Residues 1–20 form the signal peptide; the sequence is MLCLMLCVLCWSRSDVAALG. Topologically, residues 21–229 are extracellular; the sequence is SVVENEDALL…VTYSFVLRRL (209 aa). N-linked (GlcNAc...) asparagine glycans are attached at residues asparagine 48 and asparagine 163. The cysteines at positions 150 and 164 are disulfide-linked. The next 3 helical transmembrane spans lie at 230 to 254, 262 to 279, and 296 to 317; these read PLFY…VFYL, LSLS…LLVI, and YLLF…VINV. Residues 318–425 lie on the Cytoplasmic side of the membrane; it reads HHRSSATYHP…WKFVAQVLDR (108 aa). Residues 426–444 form a helical membrane-spanning segment; it reads IFLWLFLVVSVTGSVLIFT.

Belongs to the ligand-gated ion channel (TC 1.A.9) family. Acetylcholine receptor (TC 1.A.9.1) subfamily. Beta-3/CHRNB3 sub-subfamily. Neuronal AChR seems to be composed of two different type of subunits: alpha and beta. CHRNB3/beta-3 subunit is only able to form functional nAChRs when co-assembled with another beta subunit. Participates in pentameric assemblies along with CHRNA4/alpha-4 and CHRNB2/beta-2 subunits and with CHRNA6/alpha-6 as well, forming stoichiometries such as (CHRNA3:CHRNB4)2:CHRNB3, (CHRNA4:CHRNB2)2:CHRNB3 or (CHRNA6:CHRNB2)2:CHRNB3. Relatively abundant in the developing retina and in the trigeminal ganglion.

The protein resides in the synaptic cell membrane. The protein localises to the cell membrane. The catalysed reaction is Ca(2+)(in) = Ca(2+)(out). It carries out the reaction K(+)(in) = K(+)(out). The enzyme catalyses Na(+)(in) = Na(+)(out). Activated by a myriad of ligands such as acetylcholine, cytisine, nicotine, choline and epibatidine. Functionally, component of neuronal acetylcholine receptors (nAChRs) that function as pentameric, ligand-gated cation channels with high calcium permeability among other activities. nAChRs are excitatory neurotrasnmitter receptors formed by a collection of nAChR subunits known to mediate synaptic transmission in the nervous system and the neuromuscular junction. Each nAchR subunit confers differential attributes to channel properties, including activation, deactivation and desensitization kinetics, pH sensitivity, cation permeability, and binding to allosteric modulators. Has an accessory rather than functional role and is only able to form functional nAChRs when co-assembled with another beta subunit. Participates in pentameric assemblies along with CHRNA3, CHRNA4, CHRNA6, CHRNB2 and CHRNB4. Modulates receptor assembly and increases receptor sensitivity to nicotine when associated with CHRNB2, CHRNA4 and/or CHRNA6 as well as CHRNA3 and CHRNB4. Seems to play a role in nicotine addiction. The protein is Neuronal acetylcholine receptor subunit beta-3 (CHRNB3) of Gallus gallus (Chicken).